A 453-amino-acid polypeptide reads, in one-letter code: Septin-10 (453 aa).

A disordered region spans residues 18-43; sequence KTAHTSSQVSDHEQKQKDSPRSLTMS. The segment covering 27–37 has biased composition (basic and acidic residues); it reads SDHEQKQKDSP. Positions 62-328 constitute a Septin-type G domain; it reads QGFCFNILCV…ELYRRRKLEE (267 aa). The tract at residues 72–79 is G1 motif; sequence GETGIGKS. GTP contacts are provided by residues 72–79, G127, 208–216, G262, and R277; these read GETGIGKS and KADAISKTE. Residues 124-127 form a G3 motif region; the sequence is NTVG. Positions 207-210 are G4 motif; that stretch reads AKAD. A disordered region spans residues 433–453; it reads TFMTPGSNLRKDKDRKNSNFM. Residues 441–453 show a composition bias toward basic and acidic residues; it reads LRKDKDRKNSNFM.

This sequence belongs to the TRAFAC class TrmE-Era-EngA-EngB-Septin-like GTPase superfamily. Septin GTPase family. In terms of assembly, septins polymerize into heterooligomeric protein complexes that form filaments, and can associate with cellular membranes, actin filaments and microtubules. GTPase activity is required for filament formation. Interacts with ADGB. In terms of processing, proteolytically cleaved in vitro in a calmodulin-dependent manner.

It localises to the cytoplasm. Its subcellular location is the cytoskeleton. The protein localises to the cell projection. The protein resides in the cilium. It is found in the flagellum. Its function is as follows. Filament-forming cytoskeletal GTPase. May play a role in cytokinesis (Potential). The sequence is that of Septin-10 from Bos taurus (Bovine).